Consider the following 251-residue polypeptide: CDP-diacylglycerol pyrophosphatase (251 aa).

Residues 4–24 (AGLLFLVMIVIAVVAAGIGYW) traverse the membrane as a helical segment.

The protein belongs to the Cdh family.

It localises to the cell inner membrane. It carries out the reaction a CDP-1,2-diacyl-sn-glycerol + H2O = a 1,2-diacyl-sn-glycero-3-phosphate + CMP + 2 H(+). The protein operates within phospholipid metabolism; CDP-diacylglycerol degradation; phosphatidate from CDP-diacylglycerol: step 1/1. This Escherichia coli O9:H4 (strain HS) protein is CDP-diacylglycerol pyrophosphatase.